Reading from the N-terminus, the 365-residue chain is Chorismate synthase (365 aa).

Positions 48 and 54 each coordinate NADP(+). Residues 125–127 (RSS), 238–239 (NA), A278, 293–297 (KPTSS), and R319 each bind FMN.

It belongs to the chorismate synthase family. As to quaternary structure, homotetramer. Requires FMNH2 as cofactor.

The enzyme catalyses 5-O-(1-carboxyvinyl)-3-phosphoshikimate = chorismate + phosphate. It participates in metabolic intermediate biosynthesis; chorismate biosynthesis; chorismate from D-erythrose 4-phosphate and phosphoenolpyruvate: step 7/7. Functionally, catalyzes the anti-1,4-elimination of the C-3 phosphate and the C-6 proR hydrogen from 5-enolpyruvylshikimate-3-phosphate (EPSP) to yield chorismate, which is the branch point compound that serves as the starting substrate for the three terminal pathways of aromatic amino acid biosynthesis. This reaction introduces a second double bond into the aromatic ring system. In Pseudoalteromonas translucida (strain TAC 125), this protein is Chorismate synthase.